Here is a 48-residue protein sequence, read N- to C-terminus: Delta-actitoxin-Bcg1c (48 aa).

Cystine bridges form between Cys-4–Cys-45, Cys-6–Cys-35, and Cys-28–Cys-46.

Its subcellular location is the secreted. It localises to the nematocyst. In terms of biological role, binds specifically to voltage-gated sodium channels SCN1A/Nav1.1, thereby delaying their inactivation during signal transduction. This Bunodosoma cangicum (Sea anemone) protein is Delta-actitoxin-Bcg1c.